Here is a 437-residue protein sequence, read N- to C-terminus: tRNA-2-methylthio-N(6)-dimethylallyladenosine synthase (437 aa).

Residues 3–120 form the MTTase N-terminal domain; sequence RKLFIETHGC…LPEMIDAART (118 aa). Residues C12, C49, C83, C157, C161, and C164 each coordinate [4Fe-4S] cluster. Positions 143 to 370 constitute a Radical SAM core domain; sequence RVDGPSAYVS…QQRINQQGFE (228 aa). The TRAM domain maps to 373 to 437; that stretch reads RRMVGTTQRI…PHSLRGSLLS (65 aa).

The protein belongs to the methylthiotransferase family. MiaB subfamily. In terms of assembly, monomer. [4Fe-4S] cluster serves as cofactor.

The protein resides in the cytoplasm. It catalyses the reaction N(6)-dimethylallyladenosine(37) in tRNA + (sulfur carrier)-SH + AH2 + 2 S-adenosyl-L-methionine = 2-methylsulfanyl-N(6)-dimethylallyladenosine(37) in tRNA + (sulfur carrier)-H + 5'-deoxyadenosine + L-methionine + A + S-adenosyl-L-homocysteine + 2 H(+). Its function is as follows. Catalyzes the methylthiolation of N6-(dimethylallyl)adenosine (i(6)A), leading to the formation of 2-methylthio-N6-(dimethylallyl)adenosine (ms(2)i(6)A) at position 37 in tRNAs that read codons beginning with uridine. In Stutzerimonas stutzeri (strain A1501) (Pseudomonas stutzeri), this protein is tRNA-2-methylthio-N(6)-dimethylallyladenosine synthase.